The primary structure comprises 422 residues: Electron transfer flavoprotein subunit alpha (422 aa).

The tract at residues 61 to 80 (KRIDRSGTQQGAGGGKASAS) is disordered. Residues 329–330 (SR), 343–347 (QVGAT), 360–367 (GISGAIQH), and asparagine 381 contribute to the FAD site.

This sequence belongs to the ETF alpha-subunit/FixB family. Heterodimer of an alpha and a beta subunit. FAD serves as cofactor.

Functionally, participates in the electron transfer process during N,N-dimethylglycine (DMG) degradation to sarcosine. In Chromohalobacter salexigens (strain ATCC BAA-138 / DSM 3043 / CIP 106854 / NCIMB 13768 / 1H11), this protein is Electron transfer flavoprotein subunit alpha.